Reading from the N-terminus, the 517-residue chain is Ribonuclease Y (517 aa).

Residues 2–22 form a helical membrane-spanning segment; that stretch reads EILVYIIIGIAIFILSLLVGI. A KH domain is found at 207 to 267; sequence TTSTVALPTD…LRREIAKRTL (61 aa). An HD domain is found at 333-426; sequence VLEHSIEVAQ…VAASDALSAS (94 aa).

The protein belongs to the RNase Y family.

The protein resides in the cell membrane. Its function is as follows. Endoribonuclease that initiates mRNA decay. The protein is Ribonuclease Y of Petrotoga mobilis (strain DSM 10674 / SJ95).